The chain runs to 271 residues: Cyclase-like protein 3 (271 aa).

Positions 1–21 (MYHLLIIITTLSFSSINITFA) are cleaved as a signal peptide.

The protein belongs to the Cyclase 1 superfamily.

Its subcellular location is the secreted. It localises to the extracellular space. It is found in the extracellular matrix. This chain is Cyclase-like protein 3, found in Arabidopsis thaliana (Mouse-ear cress).